Reading from the N-terminus, the 481-residue chain is Trigger factor (481 aa).

One can recognise a PPIase FKBP-type domain in the interval 161–298; sequence GDQLTATVQT…VSEIQNRQLP (138 aa). The interval 173 to 245 is disordered; the sequence is DGVPLHKLDE…PTTLIMEERR (73 aa). Residues 182-235 are compositionally biased toward acidic residues; that stretch reads EEDDDDDDDDDDDDDDDDDDDDDDDDDDDDDDDDDDDDDDDDDDDDDDDDDEGE.

It belongs to the FKBP-type PPIase family. Tig subfamily.

The protein resides in the cytoplasm. It catalyses the reaction [protein]-peptidylproline (omega=180) = [protein]-peptidylproline (omega=0). In terms of biological role, involved in protein export. Acts as a chaperone by maintaining the newly synthesized protein in an open conformation. Functions as a peptidyl-prolyl cis-trans isomerase. This is Trigger factor from Herpetosiphon aurantiacus (strain ATCC 23779 / DSM 785 / 114-95).